The sequence spans 183 residues: Inosine/xanthosine triphosphatase (183 aa).

Residue D75 coordinates Mg(2+). Residue 75–76 participates in substrate binding; it reads DG.

The protein belongs to the YjjX NTPase family. Homodimer. It depends on Mg(2+) as a cofactor. Requires Mn(2+) as cofactor.

It catalyses the reaction XTP + H2O = XDP + phosphate + H(+). It carries out the reaction ITP + H2O = IDP + phosphate + H(+). In terms of biological role, phosphatase that hydrolyzes non-canonical purine nucleotides such as XTP and ITP to their respective diphosphate derivatives. Probably excludes non-canonical purines from DNA/RNA precursor pool, thus preventing their incorporation into DNA/RNA and avoiding chromosomal lesions. In Vibrio vulnificus (strain YJ016), this protein is Inosine/xanthosine triphosphatase.